Reading from the N-terminus, the 955-residue chain is Glycine dehydrogenase (decarboxylating) (955 aa).

N6-(pyridoxal phosphate)lysine is present on lysine 702.

It belongs to the GcvP family. The glycine cleavage system is composed of four proteins: P, T, L and H. Requires pyridoxal 5'-phosphate as cofactor.

The catalysed reaction is N(6)-[(R)-lipoyl]-L-lysyl-[glycine-cleavage complex H protein] + glycine + H(+) = N(6)-[(R)-S(8)-aminomethyldihydrolipoyl]-L-lysyl-[glycine-cleavage complex H protein] + CO2. Its function is as follows. The glycine cleavage system catalyzes the degradation of glycine. The P protein binds the alpha-amino group of glycine through its pyridoxal phosphate cofactor; CO(2) is released and the remaining methylamine moiety is then transferred to the lipoamide cofactor of the H protein. The sequence is that of Glycine dehydrogenase (decarboxylating) from Stenotrophomonas maltophilia (strain K279a).